Consider the following 501-residue polypeptide: ATP synthase subunit alpha (501 aa).

169 to 176 lines the ATP pocket; that stretch reads GDRQTGKT.

The protein belongs to the ATPase alpha/beta chains family. In terms of assembly, F-type ATPases have 2 components, CF(1) - the catalytic core - and CF(0) - the membrane proton channel. CF(1) has five subunits: alpha(3), beta(3), gamma(1), delta(1), epsilon(1). CF(0) has three main subunits: a(1), b(2) and c(9-12). The alpha and beta chains form an alternating ring which encloses part of the gamma chain. CF(1) is attached to CF(0) by a central stalk formed by the gamma and epsilon chains, while a peripheral stalk is formed by the delta and b chains.

It is found in the cell membrane. The catalysed reaction is ATP + H2O + 4 H(+)(in) = ADP + phosphate + 5 H(+)(out). Functionally, produces ATP from ADP in the presence of a proton gradient across the membrane. The alpha chain is a regulatory subunit. In Streptococcus pneumoniae (strain 70585), this protein is ATP synthase subunit alpha.